A 197-amino-acid chain; its full sequence is dTTP/UTP pyrophosphatase (197 aa).

Aspartate 70 functions as the Proton acceptor in the catalytic mechanism.

This sequence belongs to the Maf family. YhdE subfamily. It depends on a divalent metal cation as a cofactor.

The protein resides in the cytoplasm. It carries out the reaction dTTP + H2O = dTMP + diphosphate + H(+). It catalyses the reaction UTP + H2O = UMP + diphosphate + H(+). Nucleoside triphosphate pyrophosphatase that hydrolyzes dTTP and UTP. May have a dual role in cell division arrest and in preventing the incorporation of modified nucleotides into cellular nucleic acids. The polypeptide is dTTP/UTP pyrophosphatase (Yersinia pestis bv. Antiqua (strain Antiqua)).